A 500-amino-acid chain; its full sequence is Tyrosine decarboxylase 2 (500 aa).

A run of 2 repeats spans residues 65–122 (EDIR…TELE) and 125–176 (VLDW…GKRS). Residues 65 to 176 (EDIRQKIVPG…KFLNRFGKRS (112 aa)) are 2 X approximate tandem repeats. S89 is a substrate binding site. Residues A153 and S154 each coordinate pyridoxal 5'-phosphate. H189 contributes to the substrate binding site. Pyridoxal 5'-phosphate is bound by residues T248 and N302. K305 carries the post-translational modification N6-(pyridoxal phosphate)lysine.

Belongs to the group II decarboxylase family. Pyridoxal 5'-phosphate serves as cofactor. Mostly expressed in bulbs, and, to a lower extent, in stems, roots, leaves and flowers.

The catalysed reaction is L-tyrosine + H(+) = tyramine + CO2. It functions in the pathway alkaloid biosynthesis. In terms of biological role, catalyzes the decarboxylation of L-tyrosine to tyramine, which is converted to norbelladine, a precursor to all Amaryllidaceae alkaloids such as galanthamine, lycorine and haemanthamine, and including haemanthamine- and crinamine-type alkaloids, promising anticancer agents. The sequence is that of Tyrosine decarboxylase 2 from Narcissus pseudonarcissus (Daffodil).